A 424-amino-acid chain; its full sequence is Protein pellino (424 aa).

A disordered region spans residues 1–21 (MVKRTDGTESPILAEDGGDGH). Phosphoserine is present on Ser-10.

It belongs to the pellino family. As to quaternary structure, interacts with pll.

Its function is as follows. Scaffold protein involved in the Toll signaling pathway via its interaction with pelle/pll kinase. This Drosophila melanogaster (Fruit fly) protein is Protein pellino (Pli).